Reading from the N-terminus, the 119-residue chain is Flagellar transcriptional regulator FlhD (119 aa).

It belongs to the FlhD family. In terms of assembly, homodimer; disulfide-linked. Forms a heterohexamer composed of two FlhC and four FlhD subunits. Each FlhC binds a FlhD dimer, forming a heterotrimer, and a hexamer assembles by dimerization of two heterotrimers.

It localises to the cytoplasm. Its function is as follows. Functions in complex with FlhC as a master transcriptional regulator that regulates transcription of several flagellar and non-flagellar operons by binding to their promoter region. Activates expression of class 2 flagellar genes, including fliA, which is a flagellum-specific sigma factor that turns on the class 3 genes. Also regulates genes whose products function in a variety of physiological pathways. The protein is Flagellar transcriptional regulator FlhD of Enterobacter sp. (strain 638).